Consider the following 662-residue polypeptide: Pollen receptor-like kinase 1 (662 aa).

A signal peptide spans Met1–Gly31. The Extracellular portion of the chain corresponds to Leu32–Pro256. LRR repeat units lie at residues Gln79–Thr98, Ser99–Ala121, Ala122–Gly144, Trp147–Leu169, Lys171–His191, and Gln192–Thr214. Asn197 carries N-linked (GlcNAc...) asparagine glycosylation. The disordered stretch occupies residues Glu233–Ser253. The chain crosses the membrane as a helical span at residues Leu257 to Leu277. Residues Leu278–Ala662 are Cytoplasmic-facing. A disordered region spans residues Arg288–Gly330. One can recognise a Protein kinase domain in the interval Lys357 to Tyr639. Ser359 is subject to Phosphoserine. ATP-binding positions include Leu363 to Ser371 and Lys385. Ser437 carries the phosphoserine modification. Thr457 is subject to Phosphothreonine. At Tyr527 the chain carries Phosphotyrosine. Residues Asp636 to Ala662 form a disordered region. Residues Thr646–Ser655 are compositionally biased toward basic and acidic residues.

Belongs to the protein kinase superfamily. Ser/Thr protein kinase family. As to quaternary structure, interacts in vitro with ROPGEF1 (via PRONE domain). Expressed in pollen and/or in flowers, but not in leaves.

It is found in the cell membrane. The catalysed reaction is L-seryl-[protein] + ATP = O-phospho-L-seryl-[protein] + ADP + H(+). The enzyme catalyses L-threonyl-[protein] + ATP = O-phospho-L-threonyl-[protein] + ADP + H(+). Functionally, receptor-like kinase involved in the control of pollen germination and pollen tube polar growth. This is Pollen receptor-like kinase 1 from Arabidopsis thaliana (Mouse-ear cress).